A 269-amino-acid chain; its full sequence is Embryonic polyadenylate-binding protein 2 (269 aa).

The interval 26 to 54 (EAQGWGAWGRTEKTSLVPSAGSDKEAEEN) is disordered. In terms of domain architecture, RRM spans 139 to 216 (RSVYVGNVDY…RVIKVLPKRT (78 aa)). Positions 240-269 (LQGSLQRKPRLRPHGQSRGRGRASPWFSPY) are disordered. Positions 246–260 (RKPRLRPHGQSRGRG) are enriched in basic residues.

The protein localises to the cytoplasm. In terms of biological role, binds the poly(A) tail of mRNA. This chain is Embryonic polyadenylate-binding protein 2 (Pabpn1l), found in Rattus norvegicus (Rat).